The sequence spans 563 residues: BOS complex subunit NCLN (563 aa).

An N-terminal signal peptide occupies residues 1-42; sequence MLEEAGEVLENVLKASCLPLGFIVFLPAVLLLVAPPLPAADA. The Lumenal portion of the chain corresponds to 43–522; it reads AHEFTVYRMQ…VMNAYRVKPA (480 aa). N-linked (GlcNAc...) asparagine glycosylation is found at Asn-241 and Asn-428. The chain crosses the membrane as a helical span at residues 523–543; that stretch reads IFDLLLALCIGAYLGMAYTAV. The Cytoplasmic portion of the chain corresponds to 544-563; the sequence is QHFHVLYKTVQRLLLKAKAQ.

Belongs to the nicastrin family. In terms of assembly, component of the back of Sec61 (BOS) complex, composed of NCLN/Nicalin, NOMO1 and TMEM147. The BOS complex is part of the multi-pass translocon (MPT) complex, composed of three subcomplexes, the GEL complex (composed of RAB5IF/OPTI and TMCO1), the BOS complex (composed of NCLN/Nicalin, NOMO1 and TMEM147) and the PAT complex (composed of WDR83OS/Asterix and CCDC47). The MPT complex associates with the SEC61 complex.

It localises to the endoplasmic reticulum membrane. In terms of biological role, component of the multi-pass translocon (MPT) complex that mediates insertion of multi-pass membrane proteins into the lipid bilayer of membranes. The MPT complex takes over after the SEC61 complex: following membrane insertion of the first few transmembrane segments of proteins by the SEC61 complex, the MPT complex occludes the lateral gate of the SEC61 complex to promote insertion of subsequent transmembrane regions. May antagonize Nodal signaling and subsequent organization of axial structures during mesodermal patterning, via its interaction with NOMO. This chain is BOS complex subunit NCLN (Ncln), found in Mus musculus (Mouse).